Here is a 204-residue protein sequence, read N- to C-terminus: Histone chaperone ASF1A (204 aa).

Residues 1–156 (MAKVQVNNVV…TRFHINWEDN (156 aa)) are interaction with histone H3, CHAF1B, and HIRA. Positions 31-37 (IEDLSED) match the Required for interaction with HIRA motif. The required for interaction with HIRA stretch occupies residues 155–204 (DNTEKLEDAESSNPNLPSLLSTDALPSASKGWSTSENSLNVMLESHMDCM). Serine 192 is subject to Phosphoserine; by TLK2.

Belongs to the ASF1 family. Interacts with histone H3 (via C-terminus), including histone H3.1, H3.2 and H3.3, and histone H4; the interaction with H3 is direct. Probably interacts with the heterodimeric form of H3-H4 taking the place of the second dimer. Interacts with the CHAF1A, CHAF1B and RBBP4 subunits of the CAF-1 complex. Interacts with CABIN1, HAT1, HIRA, NASP, TAF1 and UBN1. Found in a soluble complex with NASP and histones H3 and H4; the interaction with NASP is probably indirect and mediated by H3-H4. Interacts with CDAN1. Found in a cytosolic complex with IPO4 and histones H3 and H4. Interacts with CREBBP. Post-translationally, phosphorylated by TLK1 and TLK2. Highly phosphorylated in S-phase and at lower levels in M-phase. TLK2-mediated phosphorylation at Ser-192 prevents proteasome-dependent degradation.

It is found in the nucleus. Its function is as follows. Histone chaperone that facilitates histone deposition and histone exchange and removal during nucleosome assembly and disassembly. Cooperates with chromatin assembly factor 1 (CAF-1) to promote replication-dependent chromatin assembly and with HIRA to promote replication-independent chromatin assembly. Promotes homologous recombination-mediated repair of double-strand breaks (DSBs) at stalled or collapsed replication forks: acts by mediating histone replacement at DSBs, leading to recruitment of the MMS22L-TONSL complex and subsequent loading of RAD51. Also involved in the nuclear import of the histone H3-H4 dimer together with importin-4 (IPO4): specifically recognizes and binds newly synthesized histones with the monomethylation of H3 'Lys-9' and acetylation at 'Lys-14' (H3K9me1K14ac) marks, and diacetylation at 'Lys-5' and 'Lys-12' of H4 (H4K5K12ac) marks in the cytosol. Required for the formation of senescence-associated heterochromatin foci (SAHF) and efficient senescence-associated cell cycle exit. In Bos taurus (Bovine), this protein is Histone chaperone ASF1A (ASF1A).